The following is a 394-amino-acid chain: tRNA-specific 2-thiouridylase MnmA (394 aa).

ATP is bound by residues 30 to 37 and Leu-56; that span reads AMSGGVDS. The active-site Nucleophile is the Cys-124. An intrachain disulfide couples Cys-124 to Cys-220. Gly-148 contacts ATP. The segment at 170 to 172 is interaction with tRNA; it reads RDQ. Residue Cys-220 is the Cysteine persulfide intermediate of the active site.

The protein belongs to the MnmA/TRMU family.

Its subcellular location is the cytoplasm. It catalyses the reaction S-sulfanyl-L-cysteinyl-[protein] + uridine(34) in tRNA + AH2 + ATP = 2-thiouridine(34) in tRNA + L-cysteinyl-[protein] + A + AMP + diphosphate + H(+). In terms of biological role, catalyzes the 2-thiolation of uridine at the wobble position (U34) of tRNA, leading to the formation of s(2)U34. This chain is tRNA-specific 2-thiouridylase MnmA, found in Hyphomonas neptunium (strain ATCC 15444).